Consider the following 616-residue polypeptide: Membrane protein insertase YidC (616 aa).

Residues 9-29 traverse the membrane as a helical segment; it reads ILAVILSGLVLIAWQYFYNVP. The disordered stretch occupies residues 37–80; the sequence is QQQAQAELQKTTPQPTASATPGATPQSGGAAQPSTPAAGQQAQP. Over residues 44-71 the composition is skewed to polar residues; it reads LQKTTPQPTASATPGATPQSGGAAQPST. 4 helical membrane-spanning segments follow: residues 388-408, 462-482, 520-540, and 559-579; these read FFGN…LLFF, LPVV…FVTI, VFGH…TMWF, and WMPL…VIYW.

The protein belongs to the OXA1/ALB3/YidC family. Type 1 subfamily. Interacts with the Sec translocase complex via SecD. Specifically interacts with transmembrane segments of nascent integral membrane proteins during membrane integration.

It localises to the cell inner membrane. Its function is as follows. Required for the insertion and/or proper folding and/or complex formation of integral membrane proteins into the membrane. Involved in integration of membrane proteins that insert both dependently and independently of the Sec translocase complex, as well as at least some lipoproteins. Aids folding of multispanning membrane proteins. This Bradyrhizobium diazoefficiens (strain JCM 10833 / BCRC 13528 / IAM 13628 / NBRC 14792 / USDA 110) protein is Membrane protein insertase YidC.